Consider the following 266-residue polypeptide: Isopentenyl phosphate kinase (266 aa).

Residue 5 to 9 (KLGGS) participates in ATP binding. Alanine 47 provides a ligand contact to substrate. Residue glycine 48 coordinates ATP. Histidine 52 and glycine 157 together coordinate substrate. ATP is bound by residues aspartate 178, 183–188 (YTRNPK), glycine 219, and lysine 223.

This sequence belongs to the isopentenyl phosphate kinase family. As to quaternary structure, homodimer.

It catalyses the reaction isopentenyl phosphate + ATP = isopentenyl diphosphate + ADP. In terms of biological role, catalyzes the formation of isopentenyl diphosphate (IPP), the building block of all isoprenoids. Has lower activity with dimethylallyl phosphate (DMAP) and isopentenyl thiolophosphate (ISP). Has low activity with 1-butyl phosphate (BP) and 3-buten-1-yl phosphate (BEP). Has no significant activity with geranyl phosphate (in vitro). The sequence is that of Isopentenyl phosphate kinase from Methanothermobacter thermautotrophicus (strain ATCC 29096 / DSM 1053 / JCM 10044 / NBRC 100330 / Delta H) (Methanobacterium thermoautotrophicum).